A 334-amino-acid polypeptide reads, in one-letter code: D-alanine--D-alanine ligase (334 aa).

An ATP-grasp domain is found at 114-314 (KRIWRFEGLP…YEELCLRILA (201 aa)). Residue 140–195 (LEDLGSPMIVKPSREGSTIGLTKVTSPGQCEQAYRLASRYDPEVLCEQFIEGEETT) coordinates ATP. 3 residues coordinate Mg(2+): D267, E281, and N283.

It belongs to the D-alanine--D-alanine ligase family. Requires Mg(2+) as cofactor. The cofactor is Mn(2+).

The protein localises to the cytoplasm. The enzyme catalyses 2 D-alanine + ATP = D-alanyl-D-alanine + ADP + phosphate + H(+). It participates in cell wall biogenesis; peptidoglycan biosynthesis. Functionally, cell wall formation. The polypeptide is D-alanine--D-alanine ligase (Paracidovorax citrulli (strain AAC00-1) (Acidovorax citrulli)).